The primary structure comprises 514 residues: Glutamyl-tRNA(Gln) amidotransferase subunit A (514 aa).

Residues lysine 76 and serine 151 each act as charge relay system in the active site. Serine 175 functions as the Acyl-ester intermediate in the catalytic mechanism.

The protein belongs to the amidase family. GatA subfamily. Heterotrimer of A, B and C subunits.

It catalyses the reaction L-glutamyl-tRNA(Gln) + L-glutamine + ATP + H2O = L-glutaminyl-tRNA(Gln) + L-glutamate + ADP + phosphate + H(+). Allows the formation of correctly charged Gln-tRNA(Gln) through the transamidation of misacylated Glu-tRNA(Gln) in organisms which lack glutaminyl-tRNA synthetase. The reaction takes place in the presence of glutamine and ATP through an activated gamma-phospho-Glu-tRNA(Gln). This is Glutamyl-tRNA(Gln) amidotransferase subunit A from Salinibacter ruber (strain DSM 13855 / M31).